Here is a 314-residue protein sequence, read N- to C-terminus: Ribosomal RNA small subunit methyltransferase H (314 aa).

S-adenosyl-L-methionine contacts are provided by residues 34-36, aspartate 53, phenylalanine 82, aspartate 103, and glutamine 110; that span reads GGH.

Belongs to the methyltransferase superfamily. RsmH family.

It localises to the cytoplasm. It catalyses the reaction cytidine(1402) in 16S rRNA + S-adenosyl-L-methionine = N(4)-methylcytidine(1402) in 16S rRNA + S-adenosyl-L-homocysteine + H(+). Its function is as follows. Specifically methylates the N4 position of cytidine in position 1402 (C1402) of 16S rRNA. The chain is Ribosomal RNA small subunit methyltransferase H from Limosilactobacillus fermentum (strain NBRC 3956 / LMG 18251) (Lactobacillus fermentum).